A 435-amino-acid polypeptide reads, in one-letter code: GTPase Obg (435 aa).

An Obg domain is found at 6-164 (ADFVDRVKIF…RWLELELKIL (159 aa)). Positions 165–335 (ADVGLVGYPN…LVSKLASIVR (171 aa)) constitute an OBG-type G domain. Residues 171-178 (GYPNVGKS), 196-200 (FTTLI), 217-220 (DIPG), 287-290 (NKID), and 316-318 (SAV) contribute to the GTP site. Mg(2+)-binding residues include serine 178 and threonine 198. An OCT domain is found at 357-435 (RRLPEKFHLE…IGDFEFEYRE (79 aa)).

Belongs to the TRAFAC class OBG-HflX-like GTPase superfamily. OBG GTPase family. Monomer. It depends on Mg(2+) as a cofactor.

The protein localises to the cytoplasm. Functionally, an essential GTPase which binds GTP, GDP and possibly (p)ppGpp with moderate affinity, with high nucleotide exchange rates and a fairly low GTP hydrolysis rate. Plays a role in control of the cell cycle, stress response, ribosome biogenesis and in those bacteria that undergo differentiation, in morphogenesis control. The chain is GTPase Obg from Thermotoga petrophila (strain ATCC BAA-488 / DSM 13995 / JCM 10881 / RKU-1).